A 210-amino-acid polypeptide reads, in one-letter code: CKLF-like MARVEL transmembrane domain-containing protein 2B (210 aa).

The next 4 membrane-spanning stretches (helical) occupy residues 35–55 (FWAQ…IAAM), 65–85 (PIVI…FFLY), 103–123 (LMND…ALEA), and 127–147 (LPVP…ISII). In terms of domain architecture, MARVEL spans 35–157 (FWAQGHAECK…DLCLQRRQFK (123 aa)).

This sequence belongs to the chemokine-like factor family.

The protein resides in the membrane. The sequence is that of CKLF-like MARVEL transmembrane domain-containing protein 2B (Cmtm2b) from Mus musculus (Mouse).